The chain runs to 318 residues: Ribosomal RNA small subunit methyltransferase H (318 aa).

S-adenosyl-L-methionine-binding positions include 38–40, Asp-57, Leu-91, Asp-105, and Gln-112; that span reads AGH.

It belongs to the methyltransferase superfamily. RsmH family.

Its subcellular location is the cytoplasm. The catalysed reaction is cytidine(1402) in 16S rRNA + S-adenosyl-L-methionine = N(4)-methylcytidine(1402) in 16S rRNA + S-adenosyl-L-homocysteine + H(+). In terms of biological role, specifically methylates the N4 position of cytidine in position 1402 (C1402) of 16S rRNA. This chain is Ribosomal RNA small subunit methyltransferase H, found in Clavibacter sepedonicus (Clavibacter michiganensis subsp. sepedonicus).